Here is a 499-residue protein sequence, read N- to C-terminus: Laccase (499 aa).

2 consecutive Plastocyanin-like domains span residues 2–127 (VGPV…FVVY) and 139–281 (VDND…ILRY). N-linked (GlcNAc...) asparagine glycans are attached at residues N51 and N54. Residues H64, H66, H109, and H111 each contribute to the Cu cation site. Cystine bridges form between C85/C488 and C117/C205. At Y196 the chain carries 3'-nitrotyrosine. N208, N217, N292, and N333 each carry an N-linked (GlcNAc...) asparagine glycan. One can recognise a Plastocyanin-like 3 domain in the interval 348 to 470 (SVPVLLQILS…GGFAVVQAED (123 aa)). Y372 is subject to 3'-nitrotyrosine. N-linked (GlcNAc...) asparagine glycosylation is present at N377. Residues H395, H398, and H400 each coordinate Cu cation. Residues N416 and N436 are each glycosylated (N-linked (GlcNAc...) asparagine). Residues H452, C453, H454, and H458 each coordinate Cu cation.

Belongs to the multicopper oxidase family. Cu cation is required as a cofactor.

It is found in the secreted. It carries out the reaction 4 hydroquinone + O2 = 4 benzosemiquinone + 2 H2O. In terms of biological role, lignin degradation and detoxification of lignin-derived products. This Trametes maxima (White-rot fungus) protein is Laccase.